We begin with the raw amino-acid sequence, 778 residues long: General transcription and DNA repair factor IIH helicase subunit XPD/RAD3 (778 aa).

The 279-residue stretch at 7–285 (DLPVLFPYPK…KVDSQKLQDE (279 aa)) folds into the Helicase ATP-binding domain. Residue 42–49 (MPSGTGKT) participates in ATP binding. Residues C115, C133, C156, and C191 each coordinate [4Fe-4S] cluster. The DEAH box motif lies at 235 to 238 (DEAH). Positions 750 to 765 (SRKDQGGFIENENKEG) are enriched in basic and acidic residues. Positions 750–778 (SRKDQGGFIENENKEGEQDEDEDEDIEMQ) are disordered. Residues 766 to 778 (EQDEDEDEDIEMQ) are compositionally biased toward acidic residues.

The protein belongs to the helicase family. RAD3/XPD subfamily. Component of the 7-subunit TFIIH core complex composed of XPB/SSL2, XPD/RAD3, SSL1, TFB1, TFB2, TFB4 and TFB5, which is active in NER. The core complex associates with the 3-subunit CTD-kinase module TFIIK composed of CCL1, KIN28 and TFB3 to form the 10-subunit holoenzyme (holo-TFIIH) active in transcription. An additionnal subunit, TFB6, plays a role in the dissociation of the SSL2 helicase from TFIIH after transcription initiation. Requires [4Fe-4S] cluster as cofactor. Mg(2+) serves as cofactor.

It localises to the nucleus. The enzyme catalyses Couples ATP hydrolysis with the unwinding of duplex DNA at the replication fork by translocating in the 5'-3' direction. This creates two antiparallel DNA single strands (ssDNA). The leading ssDNA polymer is the template for DNA polymerase III holoenzyme which synthesizes a continuous strand.. It catalyses the reaction ATP + H2O = ADP + phosphate + H(+). ATP-dependent 5'-3' DNA helicase. Component of the general transcription and DNA repair factor IIH (TFIIH) core complex, which is involved in general and transcription-coupled nucleotide excision repair (NER) of damaged DNA and, when complexed to TFIIK, in RNA transcription by RNA polymerase II. In NER, TFIIH acts by opening DNA around the lesion to allow the excision of the damaged oligonucleotide and its replacement by a new DNA fragment. The ATP-dependent helicase activity of XPD/RAD3 is required for DNA opening. In transcription, TFIIH has an essential role in transcription initiation. When the pre-initiation complex (PIC) has been established, TFIIH is required for promoter opening and promoter escape. Phosphorylation of the C-terminal tail (CTD) of the largest subunit of RNA polymerase II by the kinase module TFIIK controls the initiation of transcription. XPD/RAD3 acts by forming a bridge between TFIIK and the core-TFIIH complex. Involved in the maintenance of the fidelity of DNA replication. Has single-stranded DNA-dependent ATPase activity. 5'-3' DNA helicase activity requires ATP (dATP partially substitutes), will unwind over 800 bp dsDNA. Able to unwind an RNA:DNA hybrid. The chain is General transcription and DNA repair factor IIH helicase subunit XPD/RAD3 from Saccharomyces cerevisiae (strain ATCC 204508 / S288c) (Baker's yeast).